A 1434-amino-acid chain; its full sequence is Ankyrin and armadillo repeat-containing protein (1434 aa).

Residues 309 to 329 traverse the membrane as a helical segment; the sequence is IRRGIGYLKLICFLIPFLLSL. 5 ANK repeats span residues 532–561, 569–598, 602–631, 638–667, and 671–701; these read AGYTIFHHAALHNRVSIICQLCNANFKVNQ, QGPTPLHLAAQACSLETTVCLLCSKADYTL, RGWMPIHFAAFYDNVCIIIALCRKDPSLLE, NQCTPLLLAATSGALDTIQYLFSIGANWRK, and KGNNIIHLSVLTFHTEVLKYIIKLNIPELPV. ARM repeat units lie at residues 732-771, 773-812, 814-852, 855-894, 897-936, and 1072-1112; these read DQYWRCILDAGTIPALINLLKSSKIKLQCKTVGLLSNIST, KSAVHALVEAGGIPSLINLLVCDEPEVHSRCAVILYDIAQ, ENKDVIAKYNGIPSLINLLNLNIENVLVNVMNCIRVLCI, ENNQRAVREHKGLPYLIRFLSSDSDVLKAVSSAAIAEVGR, KEIQDAIAMEGAIPPLVALFKGKQISVQMKGAMAVESLAS, and PVSQ…CIVL.

In terms of tissue distribution, ubiquitously expressed with highest level in pancreas and lowest in skeletal muscle.

The protein localises to the membrane. This chain is Ankyrin and armadillo repeat-containing protein (ANKAR), found in Homo sapiens (Human).